The following is an 81-amino-acid chain: ATP synthase subunit c, chloroplastic (81 aa).

2 consecutive transmembrane segments (helical) span residues 3 to 23 and 57 to 77; these read PIICAASVIGAGLAIGLGAIG and LAFMEALTIYGLVVALAIIFA.

This sequence belongs to the ATPase C chain family. F-type ATPases have 2 components, F(1) - the catalytic core - and F(0) - the membrane proton channel. F(1) has five subunits: alpha(3), beta(3), gamma(1), delta(1), epsilon(1). F(0) has four main subunits: a(1), b(1), b'(1) and c(10-14). The alpha and beta chains form an alternating ring which encloses part of the gamma chain. F(1) is attached to F(0) by a central stalk formed by the gamma and epsilon chains, while a peripheral stalk is formed by the delta, b and b' chains.

It is found in the plastid. The protein localises to the chloroplast thylakoid membrane. Functionally, f(1)F(0) ATP synthase produces ATP from ADP in the presence of a proton or sodium gradient. F-type ATPases consist of two structural domains, F(1) containing the extramembraneous catalytic core and F(0) containing the membrane proton channel, linked together by a central stalk and a peripheral stalk. During catalysis, ATP synthesis in the catalytic domain of F(1) is coupled via a rotary mechanism of the central stalk subunits to proton translocation. Key component of the F(0) channel; it plays a direct role in translocation across the membrane. A homomeric c-ring of between 10-14 subunits forms the central stalk rotor element with the F(1) delta and epsilon subunits. In Euglena gracilis, this protein is ATP synthase subunit c, chloroplastic.